The primary structure comprises 371 residues: Riboflavin biosynthesis protein RibD (371 aa).

Residues 1–150 are deaminase; the sequence is MEVSSEQQLF…QPYLHQRETG (150 aa). A CMP/dCMP-type deaminase domain is found at 6–128; it reads EQQLFFMREA…RLKEAGISVY (123 aa). His55 lines the Zn(2+) pocket. Glu57 acts as the Proton donor in catalysis. Zn(2+) contacts are provided by Cys80 and Cys89. The segment at 151–371 is reductase; the sequence is LPWVVMKTAA…CFECVGREDG (221 aa). NADP(+) is bound at residue Ala159. Ser173 contacts substrate. Residue Trp175 participates in NADP(+) binding. Residue Arg189 participates in substrate binding. Thr201 and Asp205 together coordinate NADP(+). Positions 209 and 212 each coordinate substrate. Ser230 is a binding site for NADP(+). Glu299 serves as a coordination point for substrate. 301-307 is a binding site for NADP(+); it reads GARLHSA.

In the N-terminal section; belongs to the cytidine and deoxycytidylate deaminase family. This sequence in the C-terminal section; belongs to the HTP reductase family. Requires Zn(2+) as cofactor.

It catalyses the reaction 2,5-diamino-6-hydroxy-4-(5-phosphoribosylamino)-pyrimidine + H2O + H(+) = 5-amino-6-(5-phospho-D-ribosylamino)uracil + NH4(+). It carries out the reaction 5-amino-6-(5-phospho-D-ribitylamino)uracil + NADP(+) = 5-amino-6-(5-phospho-D-ribosylamino)uracil + NADPH + H(+). It participates in cofactor biosynthesis; riboflavin biosynthesis; 5-amino-6-(D-ribitylamino)uracil from GTP: step 2/4. It functions in the pathway cofactor biosynthesis; riboflavin biosynthesis; 5-amino-6-(D-ribitylamino)uracil from GTP: step 3/4. Functionally, converts 2,5-diamino-6-(ribosylamino)-4(3h)-pyrimidinone 5'-phosphate into 5-amino-6-(ribosylamino)-2,4(1h,3h)-pyrimidinedione 5'-phosphate. This is Riboflavin biosynthesis protein RibD (ribD) from Chlamydia muridarum (strain MoPn / Nigg).